The chain runs to 162 residues: Peptidyl-prolyl cis-trans isomerase (162 aa).

One can recognise a PPIase cyclophilin-type domain in the interval 5 to 161 (FFDVQFGGDA…TTIKIVDSGV (157 aa)).

This sequence belongs to the cyclophilin-type PPIase family. PPIase A subfamily.

The catalysed reaction is [protein]-peptidylproline (omega=180) = [protein]-peptidylproline (omega=0). With respect to regulation, binds cyclosporin A (CsA). CsA mediates some of its effects via an inhibitory action on PPIase. PPIases accelerate the folding of proteins. It catalyzes the cis-trans isomerization of proline imidic peptide bonds in oligopeptides. The protein is Peptidyl-prolyl cis-trans isomerase of Paramecium primaurelia.